Consider the following 365-residue polypeptide: Phospho-N-acetylmuramoyl-pentapeptide-transferase (365 aa).

Transmembrane regions (helical) follow at residues 15–35 (PSGTQLLGLLSVLLVGLAVLI), 51–71 (VPVLVSAIVAGIFGMWIVPLL), 96–116 (TMGGLIFLPVGLAAGVIFAGF), 121–141 (IAVALVTLAYGVIGWVDDWQV), 156–176 (LILQIAIAVVFCIWLALTAPE), 180–200 (ITFFAGLSLPLGVFFWALAGF), 217–237 (GLAGGTGAIAFLGVGALALPA), 238–258 (HPGLSLLCACLSGACLGFIYH), 279–299 (LAAAGILSGNIWGLLIISGIF), and 344–364 (TQIVGAFYLINLGLVLLSFIL).

It belongs to the glycosyltransferase 4 family. MraY subfamily. The cofactor is Mg(2+).

It localises to the cell inner membrane. It carries out the reaction UDP-N-acetyl-alpha-D-muramoyl-L-alanyl-gamma-D-glutamyl-meso-2,6-diaminopimeloyl-D-alanyl-D-alanine + di-trans,octa-cis-undecaprenyl phosphate = di-trans,octa-cis-undecaprenyl diphospho-N-acetyl-alpha-D-muramoyl-L-alanyl-D-glutamyl-meso-2,6-diaminopimeloyl-D-alanyl-D-alanine + UMP. It participates in cell wall biogenesis; peptidoglycan biosynthesis. Its function is as follows. Catalyzes the initial step of the lipid cycle reactions in the biosynthesis of the cell wall peptidoglycan: transfers peptidoglycan precursor phospho-MurNAc-pentapeptide from UDP-MurNAc-pentapeptide onto the lipid carrier undecaprenyl phosphate, yielding undecaprenyl-pyrophosphoryl-MurNAc-pentapeptide, known as lipid I. The polypeptide is Phospho-N-acetylmuramoyl-pentapeptide-transferase (Picosynechococcus sp. (strain ATCC 27264 / PCC 7002 / PR-6) (Agmenellum quadruplicatum)).